The following is a 251-amino-acid chain: Lactose phosphotransferase system repressor (251 aa).

The region spanning 3-58 is the HTH deoR-type domain; that stretch reads KHERLDEIAKLVNKKGTIRTNEIVEGLNVSDMTVRRDLIELENKGILTKIHGGARS. A DNA-binding region (H-T-H motif) is located at residues 20-39; it reads IRTNEIVEGLNVSDMTVRRD.

In terms of biological role, repressor of the lactose catabolism operon. Galactose-6-phosphate is the inducer. This Staphylococcus aureus (strain N315) protein is Lactose phosphotransferase system repressor (lacR).